Consider the following 483-residue polypeptide: Cysteine--tRNA ligase (483 aa).

Residue Cys28 participates in Zn(2+) binding. The 'HIGH' region signature appears at 30–40 (MTVYDYCHLGH). Zn(2+)-binding residues include Cys212, His237, and Glu241. A 'KMSKS' region motif is present at residues 269–273 (KMSKS). Lys272 is an ATP binding site.

It belongs to the class-I aminoacyl-tRNA synthetase family. As to quaternary structure, monomer. Zn(2+) is required as a cofactor.

The protein resides in the cytoplasm. The catalysed reaction is tRNA(Cys) + L-cysteine + ATP = L-cysteinyl-tRNA(Cys) + AMP + diphosphate. The polypeptide is Cysteine--tRNA ligase (Bordetella avium (strain 197N)).